The primary structure comprises 420 residues: Tyrosine--tRNA ligase (420 aa).

L-tyrosine is bound at residue tyrosine 36. The 'HIGH' region motif lies at 41-50; sequence PTADSMHIGH. The L-tyrosine site is built by tyrosine 170 and glutamine 174. Residues 231–235 carry the 'KMSKS' region motif; sequence KFGKS. Residue lysine 234 participates in ATP binding. One can recognise an S4 RNA-binding domain in the interval 353–420; it reads TNIVDFIVEA…KKKYFMVKYK (68 aa).

Belongs to the class-I aminoacyl-tRNA synthetase family. TyrS type 1 subfamily. In terms of assembly, homodimer.

The protein resides in the cytoplasm. The catalysed reaction is tRNA(Tyr) + L-tyrosine + ATP = L-tyrosyl-tRNA(Tyr) + AMP + diphosphate + H(+). Its function is as follows. Catalyzes the attachment of tyrosine to tRNA(Tyr) in a two-step reaction: tyrosine is first activated by ATP to form Tyr-AMP and then transferred to the acceptor end of tRNA(Tyr). This chain is Tyrosine--tRNA ligase, found in Staphylococcus carnosus (strain TM300).